A 414-amino-acid polypeptide reads, in one-letter code: Arrestin domain-containing protein 3 (414 aa).

Short sequence motifs (PPxY motif) lie at residues 346 to 349 (PPSY) and 391 to 394 (PPLY). Positions 393-414 (LYSEIDPNPDQSSEDRPSCPSR) are disordered. A compositionally biased stretch (basic and acidic residues) spans 405–414 (SEDRPSCPSR).

It belongs to the arrestin family. In terms of assembly, interacts (via PPxY motifs) with NEDD4 (via WW domains). Interacts with ADRB2. Interacts with ADRB3. Interacts with HGS (via PPxY motifs). Does not bind TXN (thioredoxin). Interacts with ITCH. As to expression, detected in visceral fat, subcutaneous fat, brown fat and skeletal muscle, and at lower levels in kidney.

The protein localises to the cytoplasm. It localises to the cell membrane. Its subcellular location is the lysosome. It is found in the endosome. The protein resides in the early endosome. Functionally, adapter protein that plays a role in regulating cell-surface expression of adrenergic receptors and probably also other G protein-coupled receptors. Plays a role in NEDD4-mediated ubiquitination and endocytosis af activated ADRB2 and subsequent ADRB2 degradation. May recruit NEDD4 to ADRB2. Alternatively, may function as adapter protein that does not play a major role in recruiting NEDD4 to ADRB2, but rather plays a role in a targeting ADRB2 to endosomes. This chain is Arrestin domain-containing protein 3 (Arrdc3), found in Mus musculus (Mouse).